The following is a 187-amino-acid chain: Epididymal-specific lipocalin-10 (187 aa).

The first 19 residues, 1–19 (MRQGLLVLALVLVLVLVLA), serve as a signal peptide directing secretion. C90 and C163 form a disulfide bridge. N149 carries N-linked (GlcNAc...) asparagine glycosylation. Position 170 is an N6-acetyllysine (K170).

This sequence belongs to the calycin superfamily. Lipocalin family.

The protein localises to the secreted. Functionally, may play a role in male fertility. May act as a retinoid carrier protein within the epididymis. This is Epididymal-specific lipocalin-10 (LCN10) from Homo sapiens (Human).